The sequence spans 1413 residues: Zinc finger protein 609 (1413 aa).

Disordered regions lie at residues 1-26 (MSLS…SGDE), 47-196 (QKLE…GRGS), 354-484 (RFCD…EPTL), 517-659 (AHAH…RPIA), and 695-765 (PNSP…AAGD). Ser358, Ser361, and Ser379 each carry phosphoserine. At Thr381 the chain carries Phosphothreonine. A compositionally biased stretch (low complexity) spans 386–405 (AAAASDSKGTSSSSKTRAGA). Residues Ser413, Ser433, Ser446, Ser452, Ser467, and Ser470 each carry the phosphoserine modification. The span at 423-437 (ASSTSEDVKASPSSA) shows a compositional bias: polar residues. A Glycyl lysine isopeptide (Lys-Gly) (interchain with G-Cter in SUMO2) cross-link involves residue Lys479. The C2H2-type zinc finger occupies 495–520 (IDCPHPNCNKKYKHINGLKYHQAHAH). Basic and acidic residues predominate over residues 519–529 (AHTDDDSKPEA). 3 positions are modified to phosphoserine: Ser533, Ser575, and Ser577. Over residues 625-648 (SLERKCMEKEKCKKPSSLKSEKIP) the composition is skewed to basic and acidic residues. A compositionally biased stretch (basic residues) spans 725 to 735 (DKKKKDKKKKD). Position 742 is a phosphoserine (Ser742). Thr745 is subject to Phosphothreonine. The segment covering 750-763 (CRAEEGKSPFRDAA) has biased composition (basic and acidic residues). Ser757 is modified (phosphoserine). A Glycyl lysine isopeptide (Lys-Gly) (interchain with G-Cter in SUMO2) cross-link involves residue Lys788. A compositionally biased stretch (polar residues) spans 797–843 (FTDNAPSPSIGGSSRLDSTTPTQPLTPLHVVTQNGAEASSVKTNSPA). Disordered stretches follow at residues 797-962 (FTDN…VIQQ), 1004-1127 (YEEQ…RQAE), 1154-1221 (IKSE…SPLT), and 1273-1369 (SKVS…STHH). Ser803 carries the phosphoserine modification. The residue at position 822 (Thr822) is a Phosphothreonine. Residues Ser841, Ser845, and Ser848 each carry the phosphoserine modification. The span at 854–875 (GEGKVDSAKSKDPEQLVKEGAK) shows a compositional bias: basic and acidic residues. Over residues 902 to 916 (YAQSSPGTLTSSSQA) the composition is skewed to polar residues. Basic and acidic residues predominate over residues 925–949 (TKKDEEPESVEGKVKNDVCEEKKPE). Polar residues predominate over residues 950–962 (LSNSSQQPSVIQQ). The segment covering 1022–1044 (GLDKKTEMGLKEREASLKEEWKQ) has biased composition (basic and acidic residues). Ser1057 carries the post-translational modification Phosphoserine. A Glycyl lysine isopeptide (Lys-Gly) (interchain with G-Cter in SUMO2) cross-link involves residue Lys1063. 3 stretches are compositionally biased toward basic and acidic residues: residues 1099–1115 (LKGK…EASE), 1154–1189 (IKSE…KEST), and 1197–1210 (PSEE…EPRP). A Glycyl lysine isopeptide (Lys-Gly) (interchain with G-Cter in SUMO2) cross-link involves residue Lys1155. Residues 1288 to 1298 (PSVSCKASSES) are compositionally biased toward polar residues. Residue Lys1299 forms a Glycyl lysine isopeptide (Lys-Gly) (interchain with G-Cter in SUMO2) linkage. The segment covering 1330 to 1348 (GCGVVGGGGSCGSVAGAGG) has biased composition (gly residues).

As to quaternary structure, interacts (via N-terminus) with NIPBL. Interacts with the multiprotein complex Integrator. Expressed in myoblasts. Expressed in neurons in various brain regions, including striatum, prefrontal cortex, olfactory bulb, midbrain, cerebellum and hippocampus. Expressed in neural stem cells (at protein level). Expressed in thymocytes.

It localises to the nucleus. Its function is as follows. Transcription factor, which activates RAG1, and possibly RAG2, transcription. Through the regulation of RAG1/2 expression, may regulate thymocyte maturation. Along with NIPBL and the multiprotein complex Integrator, promotes cortical neuron migration during brain development by regulating the transcription of crucial genes in this process. Preferentially binds promoters containing paused RNA polymerase II. Up-regulates the expression of SEMA3A, NRP1, PLXND1 and GABBR2 genes, among others. In terms of biological role, involved in regulation of myoblast proliferation during myogenesis. This is Zinc finger protein 609 (Znf609) from Mus musculus (Mouse).